The following is a 155-amino-acid chain: MDYRFQRRLAAEILGVGESRIWISPDPELREEIEGAVTKADVRALIKRGVIKVLPEKGNAGHASKVRHLQRRKGRRRGMGRRKGVATARLDPKERWMHRIRKIRRYLRYLRDKQVIDRKTYRRLYMLAKGGTFRDLASLKRYMADRGLVPEEKIR.

The segment covering 66–84 has biased composition (basic residues); it reads VRHLQRRKGRRRGMGRRKG. The segment at 66-85 is disordered; that stretch reads VRHLQRRKGRRRGMGRRKGV.

It belongs to the eukaryotic ribosomal protein eL19 family. In terms of assembly, part of the 50S ribosomal subunit.

Binds to the 23S rRNA. The sequence is that of Large ribosomal subunit protein eL19 from Aeropyrum pernix (strain ATCC 700893 / DSM 11879 / JCM 9820 / NBRC 100138 / K1).